Consider the following 119-residue polypeptide: MPRVKRGVTARARHKKVLDQAKGYRGRRKNVYRIAKQAVMKAGQYAYRDRRQRKRQFRALWIARINAAARELGLTYSTFMNGLKKAAVEVDRKVLADLAVFDKPAFAALAEQARAKLAA.

It belongs to the bacterial ribosomal protein bL20 family.

Binds directly to 23S ribosomal RNA and is necessary for the in vitro assembly process of the 50S ribosomal subunit. It is not involved in the protein synthesizing functions of that subunit. The protein is Large ribosomal subunit protein bL20 of Azoarcus sp. (strain BH72).